Consider the following 153-residue polypeptide: NAD(P)H-quinone oxidoreductase subunit N (153 aa).

Belongs to the complex I NdhN subunit family. NDH-1 can be composed of about 15 different subunits; different subcomplexes with different compositions have been identified which probably have different functions.

The protein resides in the cellular thylakoid membrane. The catalysed reaction is a plastoquinone + NADH + (n+1) H(+)(in) = a plastoquinol + NAD(+) + n H(+)(out). It catalyses the reaction a plastoquinone + NADPH + (n+1) H(+)(in) = a plastoquinol + NADP(+) + n H(+)(out). NDH-1 shuttles electrons from an unknown electron donor, via FMN and iron-sulfur (Fe-S) centers, to quinones in the respiratory and/or the photosynthetic chain. The immediate electron acceptor for the enzyme in this species is believed to be plastoquinone. Couples the redox reaction to proton translocation, and thus conserves the redox energy in a proton gradient. Cyanobacterial NDH-1 also plays a role in inorganic carbon-concentration. This Prochlorococcus marinus (strain MIT 9313) protein is NAD(P)H-quinone oxidoreductase subunit N.